Reading from the N-terminus, the 351-residue chain is Serine/threonine-protein kinase mos (351 aa).

Residues F71–L340 form the Protein kinase domain. Residues I77–V85 and K98 contribute to the ATP site. The active-site Proton acceptor is the D194.

It belongs to the protein kinase superfamily. Ser/Thr protein kinase family.

It carries out the reaction L-seryl-[protein] + ATP = O-phospho-L-seryl-[protein] + ADP + H(+). The enzyme catalyses L-threonyl-[protein] + ATP = O-phospho-L-threonyl-[protein] + ADP + H(+). Its function is as follows. Suppresses the mitotic cell cycle in oocytes, forcing them to undergo meiosis II to produce haploid gametes. Acts as a MAPK kinase kinase (MAP3K) that acts upstream of MAP kinase in oocytes. This is Serine/threonine-protein kinase mos from Patiria pectinifera (Starfish).